A 265-amino-acid chain; its full sequence is Hydroxyethylthiazole kinase (265 aa).

Met-44 lines the substrate pocket. Positions 120 and 166 each coordinate ATP. Residue Gly-193 participates in substrate binding.

This sequence belongs to the Thz kinase family. Mg(2+) is required as a cofactor.

It catalyses the reaction 5-(2-hydroxyethyl)-4-methylthiazole + ATP = 4-methyl-5-(2-phosphooxyethyl)-thiazole + ADP + H(+). Its pathway is cofactor biosynthesis; thiamine diphosphate biosynthesis; 4-methyl-5-(2-phosphoethyl)-thiazole from 5-(2-hydroxyethyl)-4-methylthiazole: step 1/1. Functionally, catalyzes the phosphorylation of the hydroxyl group of 4-methyl-5-beta-hydroxyethylthiazole (THZ). The polypeptide is Hydroxyethylthiazole kinase (Methanosphaerula palustris (strain ATCC BAA-1556 / DSM 19958 / E1-9c)).